Consider the following 201-residue polypeptide: Oxalate oxidase 1 (201 aa).

An intrachain disulfide couples Cys-10 to Cys-26. The Cupin type-1 domain occupies 40 to 191 (SKLTKAGNTS…ALRVEAGVVE (152 aa)). Asn-47 is a glycosylation site (N-linked (GlcNAc...) asparagine). Positions 75 and 85 each coordinate oxalate. Positions 88, 90, 95, and 137 each coordinate Mn(2+). The oxalate site is built by His-90 and Glu-95.

The protein belongs to the germin family. In terms of assembly, homo hexamer; a trimer of dimers. Post-translationally, glycosylated. A form called G contains antennary GlcNAc residues, whereas a form called G' lacks antennary GlcNAc residues in its otherwise identical glycans.

It localises to the secreted. The protein localises to the extracellular space. The protein resides in the apoplast. It is found in the cell wall. It catalyses the reaction oxalate + O2 + 2 H(+) = H2O2 + 2 CO2. In terms of biological role, releases hydrogen peroxide in the apoplast which may be important for cross-linking reactions in the cell wall biochemistry. May play an important role in several aspects of plant growth and defense mechanisms. The chain is Oxalate oxidase 1 from Hordeum vulgare (Barley).